A 180-amino-acid chain; its full sequence is Ribulose bisphosphate carboxylase small subunit, chloroplastic 1 (180 aa).

The N-terminal 56 residues, 1–56 (MASSVLSSAAVATRSNVAQANMVAPFTGLKSAASFPVSRKQNLDITSIASNGGRVQ), are a transit peptide targeting the chloroplast.

Belongs to the RuBisCO small chain family. As to quaternary structure, heterohexadecamer of 8 large and 8 small subunits.

It is found in the plastid. It localises to the chloroplast. RuBisCO catalyzes two reactions: the carboxylation of D-ribulose 1,5-bisphosphate, the primary event in carbon dioxide fixation, as well as the oxidative fragmentation of the pentose substrate. Both reactions occur simultaneously and in competition at the same active site. Although the small subunit is not catalytic it is essential for maximal activity. In Nicotiana sylvestris (Wood tobacco), this protein is Ribulose bisphosphate carboxylase small subunit, chloroplastic 1.